A 485-amino-acid chain; its full sequence is AP2-like ethylene-responsive transcription factor TOE2 (485 aa).

Residues 124 to 135 (GDFIGSGSGGGD) are compositionally biased toward gly residues. Residues 124–161 (GDFIGSGSGGGDASRVMQPPSQPVKKSRRGPRSKSSQY) are disordered. Residues 160-216 (QYRGVTFYRRTGRWESHIWDCGKQVYLGGFDTAHAAARAYDRAAVKFRGLEADINFV) constitute a DNA-binding region (AP2/ERF).

Belongs to the AP2/ERF transcription factor family. AP2 subfamily.

Its subcellular location is the nucleus. In terms of biological role, probably acts as a transcriptional activator. Binds to the GCC-box pathogenesis-related promoter element. May be involved in the regulation of gene expression by stress factors and by components of stress signal transduction pathways. Regulates negatively the transition to flowering time and confers flowering time delay. The polypeptide is AP2-like ethylene-responsive transcription factor TOE2 (TOE2) (Arabidopsis thaliana (Mouse-ear cress)).